Reading from the N-terminus, the 149-residue chain is Urease accessory protein UreE (149 aa).

Belongs to the UreE family.

Its subcellular location is the cytoplasm. In terms of biological role, involved in urease metallocenter assembly. Binds nickel. Probably functions as a nickel donor during metallocenter assembly. In Prochlorococcus marinus (strain MIT 9312), this protein is Urease accessory protein UreE.